The sequence spans 161 residues: Urease accessory protein UreE (161 aa).

This sequence belongs to the UreE family. In terms of assembly, homodimer.

Its subcellular location is the cytoplasm. In terms of biological role, involved in urease metallocenter assembly. Binds nickel. Probably functions as a nickel donor during metallocenter assembly. It is not essential for urease activity. The polypeptide is Urease accessory protein UreE (Proteus mirabilis (strain HI4320)).